The following is a 440-amino-acid chain: Asparagine--tRNA ligase (440 aa).

It belongs to the class-II aminoacyl-tRNA synthetase family. Homodimer.

The protein resides in the cytoplasm. It catalyses the reaction tRNA(Asn) + L-asparagine + ATP = L-asparaginyl-tRNA(Asn) + AMP + diphosphate + H(+). In Roseiflexus castenholzii (strain DSM 13941 / HLO8), this protein is Asparagine--tRNA ligase.